We begin with the raw amino-acid sequence, 253 residues long: Retinoic acid early-inducible protein 1-gamma (253 aa).

The signal sequence occupies residues methionine 1–glycine 28. Residues cysteine 37 and cysteine 56 are joined by a disulfide bond. 5 N-linked (GlcNAc...) asparagine glycosylation sites follow: asparagine 38, asparagine 70, asparagine 83, asparagine 143, and asparagine 156. A disulfide bridge links cysteine 90 with cysteine 190. A disordered region spans residues leucine 198–threonine 230. Over residues serine 211 to serine 221 the composition is skewed to low complexity. Serine 227 is lipidated: GPI-anchor amidated serine. Residues histidine 228–methionine 253 constitute a propeptide, removed in mature form.

The protein belongs to the NKG2D ligand family. Glycosylated. In terms of tissue distribution, expressed predominantly in embryonic brain.

The protein localises to the cell membrane. Its function is as follows. Acts as a ligand for KLRK1. The chain is Retinoic acid early-inducible protein 1-gamma (Raet1c) from Mus musculus (Mouse).